The chain runs to 397 residues: Polyphosphatase (397 aa).

Positions 41, 127, and 148 each coordinate Mg(2+). Mn(2+) is bound by residues aspartate 41, aspartate 127, and histidine 148. ATP contacts are provided by histidine 149, serine 286, and arginine 381.

This sequence belongs to the PPase class C family. The cofactor is Mn(2+). Requires Mg(2+) as cofactor.

The catalysed reaction is [phosphate](n) + H2O = [phosphate](n-1) + phosphate + H(+). In terms of biological role, polyphosphatase (polyPase) involved in the degradation of inorganic polyphosphates (polyP) that is able to degrade a range of chains from three to several hundreds of residues in a highly processive manner. Exclusively shows exopolyphosphatase activity, cleaving inside the polyP chain. This chain is Polyphosphatase, found in Saccharomyces cerevisiae (strain ATCC 204508 / S288c) (Baker's yeast).